A 644-amino-acid chain; its full sequence is DNA mismatch repair protein MutL (644 aa).

This sequence belongs to the DNA mismatch repair MutL/HexB family.

Functionally, this protein is involved in the repair of mismatches in DNA. It is required for dam-dependent methyl-directed DNA mismatch repair. May act as a 'molecular matchmaker', a protein that promotes the formation of a stable complex between two or more DNA-binding proteins in an ATP-dependent manner without itself being part of a final effector complex. The protein is DNA mismatch repair protein MutL of Chlorobium chlorochromatii (strain CaD3).